Here is a 616-residue protein sequence, read N- to C-terminus: Membrane protein insertase YidC (616 aa).

The helical transmembrane segment at 9–29 threads the bilayer; that stretch reads ILAVILSGLVLIAWQYFYNVP. Residues 37–80 are disordered; the sequence is QQQAQAELQKTTPQPTASATPGATPQSGGAAQPSTPAAGQQAQP. Over residues 44–71 the composition is skewed to polar residues; sequence LQKTTPQPTASATPGATPQSGGAAQPST. Helical transmembrane passes span 388–408, 462–482, 520–540, and 559–579; these read FFGNFGISILLVTVIVKLLFF, LPVVIQIPVFFSLYKVLFVTI, VFGHYLALGIWPIIMGITMWF, and WMPLIFTFMLAGFPAGLVIYW.

The protein belongs to the OXA1/ALB3/YidC family. Type 1 subfamily. In terms of assembly, interacts with the Sec translocase complex via SecD. Specifically interacts with transmembrane segments of nascent integral membrane proteins during membrane integration.

The protein localises to the cell inner membrane. Its function is as follows. Required for the insertion and/or proper folding and/or complex formation of integral membrane proteins into the membrane. Involved in integration of membrane proteins that insert both dependently and independently of the Sec translocase complex, as well as at least some lipoproteins. Aids folding of multispanning membrane proteins. The sequence is that of Membrane protein insertase YidC from Bradyrhizobium diazoefficiens (strain JCM 10833 / BCRC 13528 / IAM 13628 / NBRC 14792 / USDA 110).